The following is a 143-amino-acid chain: Photosystem I reaction center subunit IV B, chloroplastic (143 aa).

The N-terminal 51 residues, 1 to 51 (MASSSMASAASGFMVATPNIATSNTAPRTSMLFFSSSKNNTTTNFPRLVVR), are a transit peptide targeting the chloroplast. The span at 56-75 (AAPPAATATAEGEAPPAKAA) shows a compositional bias: low complexity. The disordered stretch occupies residues 56–86 (AAPPAATATAEGEAPPAKAAKPPPIGPKRGT).

Belongs to the PsaE family. In terms of processing, 2 isoforms exists (ratio 1:1). With or without the N-terminal alanine.

The protein localises to the plastid. Its subcellular location is the chloroplast thylakoid membrane. In terms of biological role, stabilizes the interaction between PsaC and the PSI core, assists the docking of the ferredoxin to PSI and interacts with ferredoxin-NADP oxidoreductase. The sequence is that of Photosystem I reaction center subunit IV B, chloroplastic (PSAEB) from Nicotiana sylvestris (Wood tobacco).